We begin with the raw amino-acid sequence, 255 residues long: Homeobox protein DLX-1 (255 aa).

Over residues 1–14 (MTMTTMPESLNSPV) the composition is skewed to polar residues. 2 disordered regions span residues 1-38 (MTMTTMPESLNSPVSGKAVFMEFGPPNQQMSPSPMSHG) and 95-118 (SLAQSRLEDPGADSEKSTVVEGGE). Residues 25–36 (PPNQQMSPSPMS) show a composition bias toward low complexity. Basic and acidic residues predominate over residues 100–112 (RLEDPGADSEKST). The homeobox DNA-binding region spans 128–187 (IRKPRTIYSSLQLQALNRRFQQTQYLALPERAELAASLGLTQTQVKIWFQNKRSKFKKLM). The segment at 204–230 (ALSAGSPPVPPGWNPNSSSGKGSGGNA) is disordered.

The protein belongs to the distal-less homeobox family. In terms of assembly, interacts with SMAD4 (via homeobox DNA-binding domain). Interacts (via homeobox DNA-binding domain) with POU4F2; this interaction suppresses DLX1-mediated transcriptional activity in postnatal retina and enhances retinal ganglion cell (RGC) differentiation. In terms of tissue distribution, expressed in hematopoietic cell lines.

It localises to the nucleus. In terms of biological role, plays a role as a transcriptional activator or repressor. Inhibits several cytokine signaling pathways, such as TGFB1, activin-A/INHBA and BMP4 by interfering with the transcriptional stimulatory activity of transcription factors, such as MSX2, FAST2, SMAD2 and SMAD3 during hematopoietic cell differentiation. Plays a role in terminal differentiation of interneurons, such as amacrine and bipolar cells in the developing retina. Likely to play a regulatory role in the development of the ventral forebrain. May play a role in craniofacial patterning and morphogenesis and may be involved in the early development of diencephalic subdivisions. This chain is Homeobox protein DLX-1 (DLX1), found in Homo sapiens (Human).